A 312-amino-acid polypeptide reads, in one-letter code: MANNDAVLKRLEQKGAEADQIIEYLKQQVSLLKEKAILQATLREEKKLRVENAKLKKEIEELKQELIQAEIQNGVKQIPFPSGTPLHANSMVSENVIQSTAVTTVSSGTKEQIKGGTGDEKKAKEKIEKKGEKKEKKQQSIAGSADSKPIDVSRLDLRIGCIITARKHPDADSLYVEEVDVGEIAPRTVVSGLVNHVPLEQMQNRMVILLCNLKPAKMRGVLSQAMVMCASSPEKIEILAPPNGSVPGDRITFDAFPGEPDKELNPKKKIWEQIQPDLHTNDECVATYKGVPFEVKGKGVCRAQTMSNSGIK.

Met-1 is subject to N-acetylmethionine. Ala-2 carries the N-acetylalanine modification. Positions 6-46 (AVLKRLEQKGAEADQIIEYLKQQVSLLKEKAILQATLREEK) are required for fibroblast proliferation. Residues 54-194 (KLKKEIEELK…APRTVVSGLV (141 aa)) form an interaction with HSP90B1 region. The tract at residues 101-114 (AVTTVSSGTKEQIK) is required for endothelial cell death. Positions 107-147 (SGTKEQIKGGTGDEKKAKEKIEKKGEKKEKKQQSIAGSADS) are disordered. Residues 111–138 (EQIKGGTGDEKKAKEKIEKKGEKKEKKQ) show a composition bias toward basic and acidic residues. A required for endothelial cell migration region spans residues 114–192 (KGGTGDEKKA…EIAPRTVVSG (79 aa)). A Glycyl lysine isopeptide (Lys-Gly) (interchain with G-Cter in SUMO1) cross-link involves residue Lys-137. Phosphoserine is present on Ser-140. In terms of domain architecture, tRNA-binding spans 151–252 (DVSRLDLRIG…NGSVPGDRIT (102 aa)). Lys-269 carries the N6-succinyllysine modification.

In terms of assembly, homodimer. Part of the multisynthetase complex (MSC), a multisubunit complex that groups tRNA ligases for Arg (RARS1), Asp (DARS1), Gln (QARS1), Ile (IARS1), Leu (LARS1), Lys (KARS1), Met (MARS1) the bifunctional ligase for Glu and Pro (EPRS1) and the auxiliary subunits AIMP1/p43, AIMP2/p38 and EEF1E1/p18. Interacts (via N-terminus) with RARS1 (via N-terminus). Part of a complex composed of RARS1, QARS1 and AIMP1. Interacts (via C-terminus) with SMURF2. Interacts (via N-terminus) with HSP90B1/gp96 (via C-terminus). Interacts with PSMA7. Interacts with TARS3. In terms of processing, cleaved by caspase-7 in response to apoptosis to produce EMAP-II.

The protein resides in the nucleus. Its subcellular location is the cytoplasm. It is found in the cytosol. The protein localises to the secreted. It localises to the endoplasmic reticulum. The protein resides in the golgi apparatus. Non-catalytic component of the multisynthase complex. Stimulates the catalytic activity of cytoplasmic arginyl-tRNA synthase. Binds tRNA. Possesses inflammatory cytokine activity. Negatively regulates TGF-beta signaling through stabilization of SMURF2 by binding to SMURF2 and inhibiting its SMAD7-mediated degradation. Involved in glucose homeostasis through induction of glucagon secretion at low glucose levels. Promotes dermal fibroblast proliferation and wound repair. Regulates KDELR1-mediated retention of HSP90B1/gp96 in the endoplasmic reticulum. Plays a role in angiogenesis by inducing endothelial cell migration at low concentrations and endothelian cell apoptosis at high concentrations. Induces maturation of dendritic cells and monocyte cell adhesion. Modulates endothelial cell responses by degrading HIF-1A through interaction with PSMA7. The chain is Aminoacyl tRNA synthase complex-interacting multifunctional protein 1 (AIMP1) from Homo sapiens (Human).